A 446-amino-acid chain; its full sequence is Histidine--tRNA ligase (446 aa).

The segment at 403–422 (TASVKPLRGTGDDGEKSVQQ) is disordered.

This sequence belongs to the class-II aminoacyl-tRNA synthetase family. As to quaternary structure, homodimer.

The protein resides in the cytoplasm. It carries out the reaction tRNA(His) + L-histidine + ATP = L-histidyl-tRNA(His) + AMP + diphosphate + H(+). The sequence is that of Histidine--tRNA ligase from Burkholderia thailandensis (strain ATCC 700388 / DSM 13276 / CCUG 48851 / CIP 106301 / E264).